Reading from the N-terminus, the 277-residue chain is Phosphatidylglycerol--prolipoprotein diacylglyceryl transferase (277 aa).

4 helical membrane passes run isoleucine 18–alanine 38, isoleucine 51–tyrosine 71, isoleucine 89–isoleucine 109, and isoleucine 116–glycine 136. An a 1,2-diacyl-sn-glycero-3-phospho-(1'-sn-glycerol)-binding site is contributed by arginine 137. A run of 3 helical transmembrane segments spans residues glutamine 177–isoleucine 197, glycine 205–methionine 225, and phenylalanine 235–tyrosine 255.

The protein belongs to the Lgt family.

It localises to the cell membrane. The catalysed reaction is L-cysteinyl-[prolipoprotein] + a 1,2-diacyl-sn-glycero-3-phospho-(1'-sn-glycerol) = an S-1,2-diacyl-sn-glyceryl-L-cysteinyl-[prolipoprotein] + sn-glycerol 1-phosphate + H(+). Its pathway is protein modification; lipoprotein biosynthesis (diacylglyceryl transfer). Functionally, catalyzes the transfer of the diacylglyceryl group from phosphatidylglycerol to the sulfhydryl group of the N-terminal cysteine of a prolipoprotein, the first step in the formation of mature lipoproteins. The chain is Phosphatidylglycerol--prolipoprotein diacylglyceryl transferase from Listeria monocytogenes serotype 4b (strain CLIP80459).